Reading from the N-terminus, the 440-residue chain is Golgi reassembly-stacking protein 1 (440 aa).

Gly-2 is lipidated: N-myristoyl glycine. PDZ GRASP-type domains lie at 15-105 and 111-199; these read EGFH…FCSF and QVWH…YGYL. The tract at residues 15 to 215 is GRASP; it reads EGFHLHGVQE…PPSYHKKPPG (201 aa). Zn(2+)-binding residues include His-18, His-20, and Cys-103. The essential for interaction with GOLGA2/GM130 stretch occupies residues 190-202; that stretch reads LGCGIGYGYLHRI. 3 disordered regions span residues 205–248, 261–301, and 327–440; these read QPPS…ETGS, PGSS…PVQR, and LPSS…STTE. Positions 214–239 are enriched in pro residues; that stretch reads PGTPPPSALPLGAPPPDALPPGPTPE. Position 216 is a phosphothreonine (Thr-216). Residues 327–336 are compositionally biased toward low complexity; the sequence is LPSSTELTTT. The segment covering 337 to 351 has biased composition (polar residues); it reads AVSTSGPEDICSSSS. Ser-362, Ser-364, and Ser-373 each carry phosphoserine.

This sequence belongs to the GORASP family. In terms of assembly, homodimer. Forms higher-order oligomers under interphase but not mitotic conditions. Dimers of the protein on one membrane might be able to interact with dimers on another and so stack cisternae. Interacts with the C-terminus of GOLGA2/GM130 under both mitotic and non-mitotic conditions. The interaction is critical for the correct targeting of both proteins to the cis-Golgi. Interacts with TMED2 and TMED3. In terms of processing, phosphorylated by CDC2/B1 and PLK kinases during mitosis. Phosphorylation cycle correlates with the cisternal stacking cycle. Phosphorylation of the homodimer prevents the association of dimers into higher-order oligomers, leading to cisternal unstacking. Post-translationally, target for caspase-3 cleavage during apoptosis. The cleavage contributes to Golgi fragmentation and occurs very early in the execution phase of apoptosis. Myristoylated.

It localises to the golgi apparatus. It is found in the cis-Golgi network membrane. Its subcellular location is the endoplasmic reticulum-Golgi intermediate compartment membrane. Key structural protein of the Golgi apparatus. The membrane cisternae of the Golgi apparatus adhere to each other to form stacks, which are aligned side by side to form the Golgi ribbon. Acting in concert with GORASP2/GRASP55, is required for the formation and maintenance of the Golgi ribbon, and may be dispensable for the formation of stacks. However, other studies suggest that GORASP1 plays an important role in assembly and membrane stacking of the cisternae, and in the reassembly of Golgi stacks after breakdown during mitosis. Caspase-mediated cleavage of GORASP1 is required for fragmentation of the Golgi during apoptosis. Also mediates, via its interaction with GOLGA2/GM130, the docking of transport vesicles with the Golgi membranes. Mediates ER stress-induced unconventional (ER/Golgi-independent) trafficking of core-glycosylated CFTR to cell membrane. This is Golgi reassembly-stacking protein 1 (GORASP1) from Homo sapiens (Human).